The sequence spans 44 residues: Protein non-structural 7b (44 aa).

Residues 9-29 traverse the membrane as a helical segment; the sequence is FYLCFLAFLLFLVLIMLIIFW.

It is found in the host membrane. The chain is Protein non-structural 7b from Homo sapiens (Human).